We begin with the raw amino-acid sequence, 196 residues long: Protein GrpE (196 aa).

A disordered region spans residues 1–40 (MSSKEQKTPEGQAPEEIIMDQHEEVEAVEPNDSAEQVDPR).

Belongs to the GrpE family. Homodimer.

Its subcellular location is the cytoplasm. Participates actively in the response to hyperosmotic and heat shock by preventing the aggregation of stress-denatured proteins, in association with DnaK and GrpE. It is the nucleotide exchange factor for DnaK and may function as a thermosensor. Unfolded proteins bind initially to DnaJ; upon interaction with the DnaJ-bound protein, DnaK hydrolyzes its bound ATP, resulting in the formation of a stable complex. GrpE releases ADP from DnaK; ATP binding to DnaK triggers the release of the substrate protein, thus completing the reaction cycle. Several rounds of ATP-dependent interactions between DnaJ, DnaK and GrpE are required for fully efficient folding. The protein is Protein GrpE of Salmonella gallinarum (strain 287/91 / NCTC 13346).